The following is a 497-amino-acid chain: Probable cytosol aminopeptidase (497 aa).

Mn(2+) contacts are provided by Lys-263 and Asp-268. The active site involves Lys-275. 3 residues coordinate Mn(2+): Asp-286, Asp-345, and Glu-347. Residue Arg-349 is part of the active site.

The protein belongs to the peptidase M17 family. Requires Mn(2+) as cofactor.

The protein localises to the cytoplasm. The enzyme catalyses Release of an N-terminal amino acid, Xaa-|-Yaa-, in which Xaa is preferably Leu, but may be other amino acids including Pro although not Arg or Lys, and Yaa may be Pro. Amino acid amides and methyl esters are also readily hydrolyzed, but rates on arylamides are exceedingly low.. It carries out the reaction Release of an N-terminal amino acid, preferentially leucine, but not glutamic or aspartic acids.. Its function is as follows. Presumably involved in the processing and regular turnover of intracellular proteins. Catalyzes the removal of unsubstituted N-terminal amino acids from various peptides. The sequence is that of Probable cytosol aminopeptidase from Brucella suis biovar 1 (strain 1330).